The following is a 574-amino-acid chain: VAO-type flavoprotein oxidase VAO615 (574 aa).

The N-terminal stretch at 1–17 (MPASLLRFLALAGTAVG) is a signal peptide. 4 cysteine pairs are disulfide-bonded: C28-C572, C64-C77, C108-C118, and C450-C476. N-linked (GlcNAc...) asparagine glycosylation occurs at N47. Residue N105 is glycosylated (N-linked (GlcNAc...) asparagine). One can recognise an FAD-binding PCMH-type domain in the interval 120 to 299 (LGNYPSYVVN…LSMTARLHRD (180 aa)). N-linked (GlcNAc...) asparagine glycans are attached at residues N129, N211, N310, N346, and N438. A cross-link (6-(S-cysteinyl)-8alpha-(pros-histidyl)-FAD (His-Cys)) is located at residues 157-222 (HDYLGKSTGK…TGHRIVGGTC (66 aa)).

This sequence belongs to the oxygen-dependent FAD-linked oxidoreductase family. FAD serves as cofactor. The FAD cofactor is bound via a bicovalent 6-S-cysteinyl, 8alpha-N1-histidyl FAD linkage.

Its subcellular location is the secreted. In terms of biological role, probably oxidoreductase that, when reduced, rapidly reacts with molecular oxygen, a hallmark of flavoprotein oxidases. A large panel of alcohols, including carbohydrates, steroids and secondary alcohols were tested as potential substrates, but none has been identified so far. This chain is VAO-type flavoprotein oxidase VAO615, found in Thermothelomyces thermophilus (strain ATCC 42464 / BCRC 31852 / DSM 1799) (Sporotrichum thermophile).